Here is a 150-residue protein sequence, read N- to C-terminus: Large ribosomal subunit protein bL9 (150 aa).

It belongs to the bacterial ribosomal protein bL9 family.

Its function is as follows. Binds to the 23S rRNA. This chain is Large ribosomal subunit protein bL9, found in Photobacterium profundum (strain SS9).